Consider the following 347-residue polypeptide: Inosamine-phosphate amidinotransferase 1 (347 aa).

Active-site residues include aspartate 179 and histidine 227. Cysteine 332 functions as the Amidino-cysteine intermediate in the catalytic mechanism.

Belongs to the amidinotransferase family. In terms of assembly, homodimer.

The enzyme catalyses 1-amino-1-deoxy-scyllo-inositol 4-phosphate + L-arginine = 1-guanidino-1-deoxy-scyllo-inositol 4-phosphate + L-ornithine. It participates in antibiotic biosynthesis; streptomycin biosynthesis. Functionally, catalyzes two non-consecutive transamidination reactions. It converts scyllo-inosamine 4-phosphate into N-amidino-scyllo-inosamine 4-phosphate and N1-amidinostreptamine 6-phosphate into streptidine 6-phosphate. The polypeptide is Inosamine-phosphate amidinotransferase 1 (strB1) (Streptomyces griseus).